A 446-amino-acid polypeptide reads, in one-letter code: D(1A) dopamine receptor (446 aa).

The Extracellular segment spans residues 1–23; that stretch reads MRTLNTSAMDGTGLVVERDFSVR. N-linked (GlcNAc...) asparagine glycosylation occurs at N5. A helical transmembrane segment spans residues 24–49; sequence ILTACFLSLLILSTLLGNTLVCAAVI. The Cytoplasmic segment spans residues 50–60; the sequence is RFRHLRSKVTN. The helical transmembrane segment at 61–87 threads the bilayer; the sequence is FFVISLAVSDLLVAVLVMPWKAVAEIA. Topologically, residues 88–96 are extracellular; that stretch reads GFWPFGSFC. A disulfide bridge connects residues C96 and C186. The chain crosses the membrane as a helical span at residues 97–119; it reads NIWVAFDIMCSTASILNLCVISV. The Cytoplasmic portion of the chain corresponds to 120 to 138; that stretch reads DRYWAISSPFRYERKMTPK. The chain crosses the membrane as a helical span at residues 139 to 163; the sequence is AAFILISVAWTLSVLISFIPVQLSW. Residues 164 to 192 are Extracellular-facing; it reads HKAKPTSPSDGNATSLAETIDNCDSSLSR. A glycan (N-linked (GlcNAc...) asparagine) is linked at N175. A helical transmembrane segment spans residues 193–218; sequence TYAISSSVISFYIPVAIMIVTYTRIY. Residues 219–272 are Cytoplasmic-facing; it reads RIAQKQIRRIAALERAAVHAKNCQTTTGNGKPVECSQPESSFKMSFKRETKVLK. The helical transmembrane segment at 273–299 threads the bilayer; sequence TLSVIMGVFVCCWLPFFILNCILPFCG. Residues 300–312 are Extracellular-facing; sequence SGETQPFCIDSIT. Residues 313–337 form a helical membrane-spanning segment; that stretch reads FDVFVWFGWANSSLNPIIYAFNADF. Topologically, residues 338-446 are cytoplasmic; sequence RKAFSTLLGC…PITQNGQHPT (109 aa). 2 S-palmitoyl cysteine lipidation sites follow: C347 and C351.

It belongs to the G-protein coupled receptor 1 family. Interacts with DNAJC14 via its C-terminus. Interacts with DRD2. Interacts with DORIP1.

It is found in the cell membrane. It localises to the endoplasmic reticulum membrane. The protein resides in the cell projection. Its subcellular location is the cilium membrane. The protein localises to the dendrite. It is found in the dendritic spine. Functionally, dopamine receptor whose activity is mediated by G proteins which activate adenylyl cyclase. In Macaca mulatta (Rhesus macaque), this protein is D(1A) dopamine receptor (DRD1).